Consider the following 129-residue polypeptide: Small ribosomal subunit protein uS11 (129 aa).

It belongs to the universal ribosomal protein uS11 family. Part of the 30S ribosomal subunit. Interacts with proteins S7 and S18. Binds to IF-3.

Its function is as follows. Located on the platform of the 30S subunit, it bridges several disparate RNA helices of the 16S rRNA. Forms part of the Shine-Dalgarno cleft in the 70S ribosome. In Azorhizobium caulinodans (strain ATCC 43989 / DSM 5975 / JCM 20966 / LMG 6465 / NBRC 14845 / NCIMB 13405 / ORS 571), this protein is Small ribosomal subunit protein uS11.